Reading from the N-terminus, the 290-residue chain is 4-hydroxybenzoate octaprenyltransferase (290 aa).

6 consecutive transmembrane segments (helical) span residues 38–58 (LAGM…GVFF), 99–119 (LFGA…SMTI), 141–161 (LPQL…FTAV), 213–233 (LIIG…GWQL), 238–258 (IYYL…KLIV), and 268–288 (AFLN…LSLL).

Belongs to the UbiA prenyltransferase family. Requires Mg(2+) as cofactor.

The protein localises to the cell inner membrane. The catalysed reaction is all-trans-octaprenyl diphosphate + 4-hydroxybenzoate = 4-hydroxy-3-(all-trans-octaprenyl)benzoate + diphosphate. It participates in cofactor biosynthesis; ubiquinone biosynthesis. Its function is as follows. Catalyzes the prenylation of para-hydroxybenzoate (PHB) with an all-trans polyprenyl group. Mediates the second step in the final reaction sequence of ubiquinone-8 (UQ-8) biosynthesis, which is the condensation of the polyisoprenoid side chain with PHB, generating the first membrane-bound Q intermediate 3-octaprenyl-4-hydroxybenzoate. The chain is 4-hydroxybenzoate octaprenyltransferase from Sodalis glossinidius (strain morsitans).